We begin with the raw amino-acid sequence, 566 residues long: Putative sulfite reductase [NADPH] hemoprotein beta-component (566 aa).

[4Fe-4S] cluster is bound by residues Cys-430, Cys-436, Cys-475, and Cys-479. Siroheme is bound at residue Cys-479.

The protein belongs to the nitrite and sulfite reductase 4Fe-4S domain family. As to quaternary structure, alpha(8)-beta(8). The alpha component is a flavoprotein, the beta component is a hemoprotein. Siroheme serves as cofactor. The cofactor is [4Fe-4S] cluster.

The enzyme catalyses hydrogen sulfide + 3 NADP(+) + 3 H2O = sulfite + 3 NADPH + 4 H(+). Its pathway is sulfur metabolism; hydrogen sulfide biosynthesis; hydrogen sulfide from sulfite (NADPH route): step 1/1. Functionally, component of the sulfite reductase complex that catalyzes the 6-electron reduction of sulfite to sulfide. This is one of several activities required for the biosynthesis of L-cysteine from sulfate. This Buchnera aphidicola subsp. Schizaphis graminum (strain Sg) protein is Putative sulfite reductase [NADPH] hemoprotein beta-component.